The following is a 238-amino-acid chain: Ubiquinone biosynthesis O-methyltransferase (238 aa).

Residues R40, G59, D80, and M124 each contribute to the S-adenosyl-L-methionine site.

Belongs to the methyltransferase superfamily. UbiG/COQ3 family.

The enzyme catalyses a 3-demethylubiquinol + S-adenosyl-L-methionine = a ubiquinol + S-adenosyl-L-homocysteine + H(+). It carries out the reaction a 3-(all-trans-polyprenyl)benzene-1,2-diol + S-adenosyl-L-methionine = a 2-methoxy-6-(all-trans-polyprenyl)phenol + S-adenosyl-L-homocysteine + H(+). It functions in the pathway cofactor biosynthesis; ubiquinone biosynthesis. Its function is as follows. O-methyltransferase that catalyzes the 2 O-methylation steps in the ubiquinone biosynthetic pathway. This Ralstonia nicotianae (strain ATCC BAA-1114 / GMI1000) (Ralstonia solanacearum) protein is Ubiquinone biosynthesis O-methyltransferase.